Consider the following 588-residue polypeptide: L-fucose isomerase (588 aa).

Residues glutamate 335 and aspartate 359 each act as proton acceptor in the active site. Mn(2+) is bound by residues glutamate 335, aspartate 359, and histidine 525.

The protein belongs to the L-fucose isomerase family. The cofactor is Mn(2+).

It localises to the cytoplasm. The catalysed reaction is L-fucose = L-fuculose. Its pathway is carbohydrate degradation; L-fucose degradation; L-lactaldehyde and glycerone phosphate from L-fucose: step 1/3. Its function is as follows. Converts the aldose L-fucose into the corresponding ketose L-fuculose. This chain is L-fucose isomerase, found in Streptococcus pneumoniae (strain JJA).